A 381-amino-acid polypeptide reads, in one-letter code: ATP synthase subunit a (381 aa).

A disordered region spans residues 24–73 (PVAAPVEQHGQAPEAAPDAHGSPAGEPGAAVEAHAAAAEHGEAAGHEGGH). Residues 47 to 59 (AGEPGAAVEAHAA) are compositionally biased toward low complexity. Over residues 60–73 (AAEHGEAAGHEGGH) the composition is skewed to basic and acidic residues. 6 helical membrane passes run 128–148 (KHVVMMWLASALLLVVVLGAV), 190–210 (LVTAFFFILFLNLFGLLPFSA), 215–235 (NLSVTVAMALFTFVITQYAAI), 255–275 (LAPLWLIMIPVEFLGLFTKPF), 290–310 (FVILALLGLIFALGTPWVAFG), and 316–336 (LSIFLLELFVAFVQAYIFTML). Over residues 351–360 (DHGHAEEHGH) the composition is skewed to basic and acidic residues. The segment at 351–381 (DHGHAEEHGHAGPAAGSEHGSHVAGASPGHG) is disordered.

Belongs to the ATPase A chain family. In terms of assembly, F-type ATPases have 2 components, CF(1) - the catalytic core - and CF(0) - the membrane proton channel. CF(1) has five subunits: alpha(3), beta(3), gamma(1), delta(1), epsilon(1). CF(0) has three main subunits: a(1), b(2) and c(9-12). The alpha and beta chains form an alternating ring which encloses part of the gamma chain. CF(1) is attached to CF(0) by a central stalk formed by the gamma and epsilon chains, while a peripheral stalk is formed by the delta and b chains.

The protein localises to the cell inner membrane. Functionally, key component of the proton channel; it plays a direct role in the translocation of protons across the membrane. The protein is ATP synthase subunit a of Anaeromyxobacter dehalogenans (strain 2CP-C).